The primary structure comprises 172 residues: Small ribosomal subunit protein uS5 (172 aa).

One can recognise an S5 DRBM domain in the interval 17 to 80 (LKEKMIQVNR…DAARRDMVKV (64 aa)).

This sequence belongs to the universal ribosomal protein uS5 family. In terms of assembly, part of the 30S ribosomal subunit. Contacts proteins S4 and S8.

Its function is as follows. With S4 and S12 plays an important role in translational accuracy. In terms of biological role, located at the back of the 30S subunit body where it stabilizes the conformation of the head with respect to the body. The protein is Small ribosomal subunit protein uS5 of Methylibium petroleiphilum (strain ATCC BAA-1232 / LMG 22953 / PM1).